The chain runs to 245 residues: Ribonuclease PH (245 aa).

Residues Arg-93 and 131-133 (GTR) contribute to the phosphate site.

Belongs to the RNase PH family. As to quaternary structure, homohexameric ring arranged as a trimer of dimers.

It carries out the reaction tRNA(n+1) + phosphate = tRNA(n) + a ribonucleoside 5'-diphosphate. Functionally, phosphorolytic 3'-5' exoribonuclease that plays an important role in tRNA 3'-end maturation. Removes nucleotide residues following the 3'-CCA terminus of tRNAs; can also add nucleotides to the ends of RNA molecules by using nucleoside diphosphates as substrates, but this may not be physiologically important. Probably plays a role in initiation of 16S rRNA degradation (leading to ribosome degradation) during starvation. The polypeptide is Ribonuclease PH (Corynebacterium glutamicum (strain R)).